Reading from the N-terminus, the 1004-residue chain is Phyllocladan-16-alpha-ol synthase (1004 aa).

The DXDD motif motif lies at 321–324; that stretch reads DADD. The Mg(2+) site is built by D667, E671, N872, D873, S876, and D880. A DEXXE motif motif is present at residues 667–671; sequence DEFME.

This sequence belongs to the terpene synthase family. Mg(2+) is required as a cofactor.

The enzyme catalyses (2E,6E,10E)-geranylgeranyl diphosphate = (+)-copalyl diphosphate. It carries out the reaction (+)-copalyl diphosphate + H2O = phyllocladan-16alpha-ol + diphosphate. Involved in the synthesis of labdane-related hydrocarbons by catalyzing the conversion of geranylgeranyl diphosphate (GGDP) to phyllocladan-16-alpha-ol in a two step via type B cyclization into a (+)-copalyl diphosphate ((+)-CDP) intermediate. The polypeptide is Phyllocladan-16-alpha-ol synthase (PaDC1) (Phomopsis amygdali (Fusicoccum amygdali)).